The sequence spans 542 residues: CTP synthase (542 aa).

The tract at residues 1 to 265 is amidoligase domain; sequence MARYVFITGG…DSEVLSAFGI (265 aa). Serine 13 lines the CTP pocket. Serine 13 contacts UTP. Position 14-19 (14-19) interacts with ATP; sequence SLGKGI. L-glutamine is bound at residue tyrosine 54. Aspartate 71 provides a ligand contact to ATP. 2 residues coordinate Mg(2+): aspartate 71 and glutamate 139. CTP-binding positions include 146–148, 186–191, and lysine 222; these read DIE and KTKPTQ. UTP contacts are provided by residues 186–191 and lysine 222; that span reads KTKPTQ. Positions 291–541 constitute a Glutamine amidotransferase type-1 domain; sequence TIAVVGKYTG…IEAAIEQSRL (251 aa). Glycine 353 serves as a coordination point for L-glutamine. Cysteine 380 functions as the Nucleophile; for glutamine hydrolysis in the catalytic mechanism. L-glutamine contacts are provided by residues 381 to 384, glutamate 404, and arginine 469; that span reads FGMQ. Active-site residues include histidine 514 and glutamate 516.

The protein belongs to the CTP synthase family. As to quaternary structure, homotetramer.

The enzyme catalyses UTP + L-glutamine + ATP + H2O = CTP + L-glutamate + ADP + phosphate + 2 H(+). It catalyses the reaction L-glutamine + H2O = L-glutamate + NH4(+). The catalysed reaction is UTP + NH4(+) + ATP = CTP + ADP + phosphate + 2 H(+). It participates in pyrimidine metabolism; CTP biosynthesis via de novo pathway; CTP from UDP: step 2/2. With respect to regulation, allosterically activated by GTP, when glutamine is the substrate; GTP has no effect on the reaction when ammonia is the substrate. The allosteric effector GTP functions by stabilizing the protein conformation that binds the tetrahedral intermediate(s) formed during glutamine hydrolysis. Inhibited by the product CTP, via allosteric rather than competitive inhibition. In terms of biological role, catalyzes the ATP-dependent amination of UTP to CTP with either L-glutamine or ammonia as the source of nitrogen. Regulates intracellular CTP levels through interactions with the four ribonucleotide triphosphates. This chain is CTP synthase, found in Brucella canis (strain ATCC 23365 / NCTC 10854 / RM-666).